The sequence spans 342 residues: Farnesyl pyrophosphate synthase 2 (342 aa).

Lysine 47, arginine 50, and glutamine 86 together coordinate isopentenyl diphosphate. Residues aspartate 93 and aspartate 97 each contribute to the Mg(2+) site. Arginine 102 contributes to the dimethylallyl diphosphate binding site. Arginine 103 lines the isopentenyl diphosphate pocket. Positions 190, 191, 229, 246, and 255 each coordinate dimethylallyl diphosphate.

Belongs to the FPP/GGPP synthase family. It depends on Mg(2+) as a cofactor.

The protein localises to the cytoplasm. The catalysed reaction is isopentenyl diphosphate + dimethylallyl diphosphate = (2E)-geranyl diphosphate + diphosphate. It catalyses the reaction isopentenyl diphosphate + (2E)-geranyl diphosphate = (2E,6E)-farnesyl diphosphate + diphosphate. It participates in isoprenoid biosynthesis; farnesyl diphosphate biosynthesis; farnesyl diphosphate from geranyl diphosphate and isopentenyl diphosphate: step 1/1. It functions in the pathway isoprenoid biosynthesis; geranyl diphosphate biosynthesis; geranyl diphosphate from dimethylallyl diphosphate and isopentenyl diphosphate: step 1/1. Catalyzes the sequential condensation of isopentenyl pyrophosphate with the allylic pyrophosphates, dimethylallyl pyrophosphate, and then with the resultant geranylpyrophosphate to the ultimate product farnesyl pyrophosphate. This chain is Farnesyl pyrophosphate synthase 2 (FPS2), found in Arabidopsis thaliana (Mouse-ear cress).